The primary structure comprises 436 residues: Trigger factor (436 aa).

One can recognise a PPIase FKBP-type domain in the interval 161-246; sequence DDQLNIDFVG…VNSVAEPKLP (86 aa).

Belongs to the FKBP-type PPIase family. Tig subfamily.

The protein resides in the cytoplasm. The catalysed reaction is [protein]-peptidylproline (omega=180) = [protein]-peptidylproline (omega=0). In terms of biological role, involved in protein export. Acts as a chaperone by maintaining the newly synthesized protein in an open conformation. Functions as a peptidyl-prolyl cis-trans isomerase. This is Trigger factor from Pseudomonas paraeruginosa (strain DSM 24068 / PA7) (Pseudomonas aeruginosa (strain PA7)).